A 274-amino-acid polypeptide reads, in one-letter code: Large ribosomal subunit protein uL2cz/uL2cy (274 aa).

The span at 1 to 15 (MAINLYKTSTPSTRN) shows a compositional bias: polar residues. Disordered regions lie at residues 1–22 (MAIN…DSQV) and 225–274 (PVDH…RRSK).

Belongs to the universal ribosomal protein uL2 family. Part of the 50S ribosomal subunit.

The protein localises to the plastid. Its subcellular location is the chloroplast. The sequence is that of Large ribosomal subunit protein uL2cz/uL2cy (rpl2-A) from Lobularia maritima (Sweet alyssum).